The sequence spans 238 residues: Heme oxygenase 1 (238 aa).

Belongs to the heme oxygenase family.

The catalysed reaction is heme b + 3 reduced [NADPH--hemoprotein reductase] + 3 O2 = biliverdin IXalpha + CO + Fe(2+) + 3 oxidized [NADPH--hemoprotein reductase] + 3 H2O + H(+). Functionally, catalyzes the opening of the heme ring with the release of iron. Key enzyme in the synthesis of the chromophoric part of the photosynthetic antennae. Upon overexpression in E.coli with PCB:ferredoxin oxidoreductase, CpeS and either CpcB or PecB permits synthesis of phycocyanin-coupled CpcB or PecB. The protein is Heme oxygenase 1 (pbsA1) of Nostoc sp. (strain PCC 7120 / SAG 25.82 / UTEX 2576).